We begin with the raw amino-acid sequence, 515 residues long: Glucose-6-phosphate 1-dehydrogenase (515 aa).

An N-acetylalanine modification is found at Ala2. Ser8 is modified (phosphoserine). Thr10 bears the Phosphothreonine mark. NADP(+) is bound by residues 38–45 (GASGDLAK) and Arg72. Position 89 is an N6-acetyllysine (Lys89). Tyr147 and Lys171 together coordinate NADP(+). D-glucose 6-phosphate-binding positions include Lys171, 201–205 (HYLGK), Glu239, and Asp258. Lys171 carries the N6-(2-hydroxyisobutyryl)lysine; alternate modification. The residue at position 171 (Lys171) is an N6-acetyllysine; alternate. Catalysis depends on His263, which acts as the Proton acceptor. Arg357 serves as a coordination point for NADP(+). Residues Lys360 and Arg365 each coordinate D-glucose 6-phosphate. The NADP(+) site is built by Lys366, Arg370, and Arg393. Position 395 (Gln395) interacts with D-glucose 6-phosphate. Residues 401–403 (YTK) and 421–423 (DLT) each bind NADP(+). Residue Lys403 is modified to N6-acetyllysine. Lys432 is subject to N6-acetyllysine. Arg487 is an NADP(+) binding site. Lys497 bears the N6-acetyllysine mark. The NADP(+) site is built by Tyr503 and Trp509. Residue Tyr503 is modified to Phosphotyrosine.

The protein belongs to the glucose-6-phosphate dehydrogenase family. In terms of assembly, homotetramer; dimer of dimers. Interacts with SIRT2; the interaction is enhanced by H(2)O(2) treatment. Forms a ternary complex with ALDOB and TP53; this interaction is direct. ALDOB stabilizes the complex inhibiting G6PD activity and keeping oxidative pentose phosphate metabolism in check. In terms of processing, acetylated by ELP3 at Lys-403; acetylation inhibits its homodimerization and enzyme activity. Deacetylated by SIRT2 at Lys-403; deacetylation stimulates its enzyme activity.

The protein resides in the cytoplasm. It localises to the cytosol. The protein localises to the membrane. The enzyme catalyses D-glucose 6-phosphate + NADP(+) = 6-phospho-D-glucono-1,5-lactone + NADPH + H(+). The protein operates within carbohydrate degradation; pentose phosphate pathway; D-ribulose 5-phosphate from D-glucose 6-phosphate (oxidative stage): step 1/3. In terms of biological role, cytosolic glucose-6-phosphate dehydrogenase that catalyzes the first and rate-limiting step of the oxidative branch within the pentose phosphate pathway/shunt, an alternative route to glycolysis for the dissimilation of carbohydrates and a major source of reducing power and metabolic intermediates for fatty acid and nucleic acid biosynthetic processes. In Rattus norvegicus (Rat), this protein is Glucose-6-phosphate 1-dehydrogenase (G6pdx).